The sequence spans 61 residues: MAVPKRKTSPSKRGMRRSADALKAPTYIEDKNSGELRRPHHIDLKTGMYRGRQVLTPKESA.

Residues 1–16 (MAVPKRKTSPSKRGMR) show a composition bias toward basic residues. A disordered region spans residues 1 to 40 (MAVPKRKTSPSKRGMRRSADALKAPTYIEDKNSGELRRPH). A compositionally biased stretch (basic and acidic residues) spans 28-40 (IEDKNSGELRRPH).

The protein belongs to the bacterial ribosomal protein bL32 family.

This is Large ribosomal subunit protein bL32 from Sinorhizobium medicae (strain WSM419) (Ensifer medicae).